Consider the following 224-residue polypeptide: N6-methyladenosine RNA demethylase ALKBH (224 aa).

The Fe2OG dioxygenase domain maps to 93 to 222 (LAQAAIVNFY…RINLNVRQMR (130 aa)). Fe cation is bound by residues His-111, Asp-113, and His-178. Arg-213 contacts 2-oxoglutarate.

Belongs to the alkB family. The cofactor is Fe(2+).

It catalyses the reaction an N(6)-methyladenosine in mRNA + 2-oxoglutarate + O2 = an adenosine in mRNA + formaldehyde + succinate + CO2. Its function is as follows. RNA demethylase that regulates the stability of mRNAs through an m(6)A-dependent manner. M6A is a modification present at internal sites of mRNAs and some non-coding RNAs and plays a role in mRNA stability and processing. Demethylate m6A at position A1935 within the 3'UTR of transcription factor ZAP1 and plays an important role in C.parasitica development and virulence. Target mRNAs are primarily associated with amino-acid biosynthesis, 2-oxocarboxylic acid metabolism, and ABC transporters, as well as alpha-amino acid metabolism, small-molecule biosynthesis, and the sulfite reductase complex (NADPH). This Cryphonectria parasitica (strain ATCC 38755 / EP155) protein is N6-methyladenosine RNA demethylase ALKBH.